We begin with the raw amino-acid sequence, 149 residues long: Nucleoside diphosphate kinase (149 aa).

6 residues coordinate ATP: Lys-9, Phe-57, Arg-85, Thr-91, Arg-102, and Asn-112. His-115 (pros-phosphohistidine intermediate) is an active-site residue.

The protein belongs to the NDK family. Homotetramer. It depends on Mg(2+) as a cofactor.

It is found in the cytoplasm. It carries out the reaction a 2'-deoxyribonucleoside 5'-diphosphate + ATP = a 2'-deoxyribonucleoside 5'-triphosphate + ADP. The enzyme catalyses a ribonucleoside 5'-diphosphate + ATP = a ribonucleoside 5'-triphosphate + ADP. Functionally, major role in the synthesis of nucleoside triphosphates other than ATP. The ATP gamma phosphate is transferred to the NDP beta phosphate via a ping-pong mechanism, using a phosphorylated active-site intermediate. In Staphylococcus aureus (strain MSSA476), this protein is Nucleoside diphosphate kinase.